We begin with the raw amino-acid sequence, 777 residues long: uncharacterized protein (777 aa).

8 disordered regions span residues 1 to 101 (MNNN…NLSN), 128 to 150 (SYNN…NDDN), 219 to 267 (HHIH…NNMN), 334 to 366 (SLPF…GIDD), 391 to 466 (ISNS…ATIS), 529 to 577 (KNLN…NNKG), 590 to 622 (LAQE…ISTI), and 713 to 751 (EKQG…KWKP). 2 stretches are compositionally biased toward low complexity: residues 128 to 147 (SYNN…NNIN) and 243 to 265 (NNNN…NHNN). Over residues 334 to 343 (SLPFSSLSDN) the composition is skewed to polar residues. Acidic residues predominate over residues 344 to 366 (NGDDDDDGIDDGIDDGIDDGIDD). The segment covering 391-407 (ISNSFHQNQSPCNNSFK) has biased composition (polar residues). Low complexity-rich tracts occupy residues 408 to 466 (NNNN…ATIS) and 532 to 574 (NNNN…NNKN). Basic and acidic residues predominate over residues 597-606 (EQNKTKKELE). 2 stretches are compositionally biased toward acidic residues: residues 607 to 620 (EVKE…EEIS) and 718 to 730 (DDPE…DSDS). A compositionally biased stretch (low complexity) spans 731 to 740 (DSNSNSDSSD).

This is an uncharacterized protein from Dictyostelium discoideum (Social amoeba).